The sequence spans 569 residues: Protein AF-9 (569 aa).

A YEATS domain is found at 1-138 (MASSCAVQVK…EDFRRKLLKA (138 aa)). The disordered stretch occupies residues 138 to 476 (AGGDPNRSIH…PPPPLLKTNN (339 aa)). Over residues 149–190 (SSSSSSSSSSSSSSSSSSSSSSSSSSSSSSSSSSSSSSSSSS) the composition is skewed to low complexity. The segment covering 202-265 (EHKEKPSKDS…PKPMSKEPKA (64 aa)) has biased composition (basic and acidic residues). A phosphoserine mark is found at Ser289 and Ser295. Residues 296 to 301 (AKKRKK) carry the Nuclear localization signal motif. Positions 304–314 (SEALFKSFSSA) are enriched in low complexity. The segment covering 323 to 350 (ADKKQIKDKSHVKMGKVKIESETSEKKK) has biased composition (basic and acidic residues). Residue Lys340 forms a Glycyl lysine isopeptide (Lys-Gly) (interchain with G-Cter in SUMO2) linkage. Over residues 358-369 (DIVDPNDSDVEE) the composition is skewed to acidic residues. Residues 372–396 (SSKSDSEQPSPASSSSSSSSSFTPS) are compositionally biased toward low complexity. Phosphoserine is present on residues Ser413 and Ser420. Residues 415-430 (DNEEESDEAEDNDNDS) are compositionally biased toward acidic residues. The span at 446 to 462 (VSLSDGSDSESSSASSP) shows a compositional bias: low complexity. Residue Ser484 is modified to Phosphoserine.

In terms of assembly, component of the super elongation complex (SEC), at least composed of EAF1, EAF2, CDK9, MLLT3/AF9, AFF (AFF1 or AFF4), the P-TEFb complex and ELL (ELL, ELL2 or ELL3). Interacts with BCOR. Interacts with CBX8. Interacts with ALKBH4. As to expression, ubiquitously expressed. Strong expression in the spleen.

The protein resides in the nucleus. It localises to the chromosome. Chromatin reader component of the super elongation complex (SEC), a complex required to increase the catalytic rate of RNA polymerase II transcription by suppressing transient pausing by the polymerase at multiple sites along the DNA. Specifically recognizes and binds acylated histone H3, with a preference for histone H3 that is crotonylated. Crotonylation marks active promoters and enhancers and confers resistance to transcriptional repressors. Recognizes and binds histone H3 crotonylated at 'Lys-9' (H3K9cr), and with slightly lower affinity histone H3 crotonylated at 'Lys-18' (H3K18cr). Also recognizes and binds histone H3 acetylated and butyrylated at 'Lys-9' (H3K9ac and H3K9bu, respectively), but with lower affinity than crotonylated histone H3. In the SEC complex, MLLT3 is required to recruit the complex to crotonylated histones. Recruitment of the SEC complex to crotonylated histones promotes recruitment of DOT1L on active chromatin to deposit histone H3 'Lys-79' methylation (H3K79me). Plays a key role in hematopoietic stem cell (HSC) maintenance by preserving, rather than conferring, HSC stemness. Acts by binding to the transcription start site of active genes in HSCs and sustaining level of H3K79me2, probably by recruiting DOT1L. This is Protein AF-9 (Mllt3) from Mus musculus (Mouse).